The primary structure comprises 129 residues: Acetophenone carboxylase beta subunit (129 aa).

Acetophenone carboxylase consists of five subunits; a heterooctameric subcomplex of two alpha (Apc1), two beta (Apc2), two gamma (Apc3) and two delta (Apc4) subunits assembles with the epsilon (Apc5) subunit in an unknown stoichiometry. Mg(2+) is required as a cofactor. The cofactor is Mn(2+).

The protein resides in the cytoplasm. The enzyme catalyses acetophenone + hydrogencarbonate + 2 ATP + H2O = 3-oxo-3-phenylpropanoate + 2 ADP + 2 phosphate + 2 H(+). Its activity is regulated as follows. Inhibited by zinc ions, carbamoylphosphate and beta,gamma-imido-ATP. Functionally, catalyzes the carboxylation of acetophenone to form 3-oxo-3-phenylpropanoate (benzoylacetate) in the anaerobic catabolism of ethylbenzene. Also carboxylates propiophenone at the same rate and 4-acetyl-pyridine at lower rates. The protein is Acetophenone carboxylase beta subunit (apc2) of Aromatoleum aromaticum (strain DSM 19018 / LMG 30748 / EbN1) (Azoarcus sp. (strain EbN1)).